Here is a 251-residue protein sequence, read N- to C-terminus: Capsid protein (251 aa).

The short motif at 3-20 (KRDLPWRSMAGTSKVSRN) is the Bipartite nuclear localization signal element. A Nuclear localization signal motif is present at residues 35 to 49 (KAAEWVNRPMYRKPR). The segment at 63–80 (CEGPCKVQSFEQRHDISH) is a zinc-finger region. The short motif at 96–117 (ITHRVGKRFCVKSVYILGKIWM) is the Nuclear export signal element. Residues 195 to 242 (KRFWKVNNHVVYNHQEAGKYENHTENALLLYMACTHASNPVYATLKIR) carry the Bipartite nuclear localization signal motif.

Belongs to the geminiviridae capsid protein family. As to quaternary structure, homomultimer. Binds to single-stranded and double-stranded viral DNA. Interacts (via nuclear localization signals) with host importin alpha-1a.

It localises to the virion. It is found in the host nucleus. Its function is as follows. Encapsidates the viral DNA into characteristic twinned ('geminate') particles. Binds the genomic viral ssDNA and shuttles it into and out of the cell nucleus. The CP of bipartite geminiviruses is not required for cell-to-cell or systemic movement. The sequence is that of Capsid protein from Tomato mottle virus (isolate Florida) (ToMoV).